Here is a 342-residue protein sequence, read N- to C-terminus: Protein pelota homolog (342 aa).

The protein belongs to the eukaryotic release factor 1 family. Pelota subfamily. In terms of assembly, monomer. It depends on a divalent metal cation as a cofactor.

The protein resides in the cytoplasm. Its function is as follows. May function in recognizing stalled ribosomes, interact with stem-loop structures in stalled mRNA molecules, and effect endonucleolytic cleavage of the mRNA. May play a role in the release non-functional ribosomes and degradation of damaged mRNAs. Has endoribonuclease activity. This is Protein pelota homolog from Sulfolobus acidocaldarius (strain ATCC 33909 / DSM 639 / JCM 8929 / NBRC 15157 / NCIMB 11770).